The primary structure comprises 312 residues: Cell division control protein 2 homolog D (312 aa).

In terms of domain architecture, Protein kinase spans 14–304 (FVKLEKVGEG…AKKAMEHPYF (291 aa)). ATP is bound by residues 20 to 28 (VGEGTYGKV) and K43. T24 carries the post-translational modification Phosphothreonine. Position 25 is a phosphotyrosine (Y25). D145 (proton acceptor) is an active-site residue. T179 carries the phosphothreonine; by CAK modification.

Belongs to the protein kinase superfamily. CMGC Ser/Thr protein kinase family. CDC2/CDKX subfamily.

It catalyses the reaction L-seryl-[protein] + ATP = O-phospho-L-seryl-[protein] + ADP + H(+). The enzyme catalyses L-threonyl-[protein] + ATP = O-phospho-L-threonyl-[protein] + ADP + H(+). It carries out the reaction [DNA-directed RNA polymerase] + ATP = phospho-[DNA-directed RNA polymerase] + ADP + H(+). Its function is as follows. Plays a key role in the control of the eukaryotic cell cycle. This chain is Cell division control protein 2 homolog D (CDC2D), found in Antirrhinum majus (Garden snapdragon).